Here is a 396-residue protein sequence, read N- to C-terminus: Phosphoglycerate kinase (396 aa).

Residues 21–23 (DLN), Arg-36, 59–62 (HFGR), Arg-118, and Arg-151 contribute to the substrate site. ATP is bound by residues Lys-201, Glu-323, and 353-356 (GGDT).

It belongs to the phosphoglycerate kinase family. As to quaternary structure, monomer.

It is found in the cytoplasm. It carries out the reaction (2R)-3-phosphoglycerate + ATP = (2R)-3-phospho-glyceroyl phosphate + ADP. It participates in carbohydrate degradation; glycolysis; pyruvate from D-glyceraldehyde 3-phosphate: step 2/5. The chain is Phosphoglycerate kinase from Rhodospirillum centenum (strain ATCC 51521 / SW).